The sequence spans 445 residues: Tubulin alpha-3 chain (445 aa).

8 residues coordinate GTP: Gln-11, Glu-72, Ser-141, Gly-145, Thr-146, Thr-180, Asn-207, and Asn-229. Glu-72 lines the Mg(2+) pocket. Residue Glu-255 is part of the active site.

This sequence belongs to the tubulin family. In terms of assembly, dimer of alpha and beta chains. A typical microtubule is a hollow water-filled tube with an outer diameter of 25 nm and an inner diameter of 15 nM. Alpha-beta heterodimers associate head-to-tail to form protofilaments running lengthwise along the microtubule wall with the beta-tubulin subunit facing the microtubule plus end conferring a structural polarity. Microtubules usually have 13 protofilaments but different protofilament numbers can be found in some organisms and specialized cells. Interacts with NUM1. It depends on Mg(2+) as a cofactor.

The protein localises to the cytoplasm. Its subcellular location is the cytoskeleton. It carries out the reaction GTP + H2O = GDP + phosphate + H(+). Functionally, tubulin is the major constituent of microtubules, a cylinder consisting of laterally associated linear protofilaments composed of alpha- and beta-tubulin heterodimers. Microtubules grow by the addition of GTP-tubulin dimers to the microtubule end, where a stabilizing cap forms. Below the cap, tubulin dimers are in GDP-bound state, owing to GTPase activity of alpha-tubulin. This is Tubulin alpha-3 chain (TUB3) from Saccharomyces cerevisiae (strain ATCC 204508 / S288c) (Baker's yeast).